We begin with the raw amino-acid sequence, 343 residues long: Palmitoyltransferase ZDHHC4 (343 aa).

At 1-2 (MD) the chain is on the lumenal side. Residues 3 to 23 (FLVLFLLYLALVLLGFVMICI) traverse the membrane as a helical segment. Residues 24-67 (GSKTHYLQGLISRGAQVFSYIIPECLQRAMLSVLHYLFHTRNYT) are Cytoplasmic-facing. The chain crosses the membrane as a helical span at residues 68–88 (FVVLHLILQGMVYTEYTWEIF). The Lumenal portion of the chain corresponds to 89 to 95 (GLCQQLE). The helical transmembrane segment at 96–116 (FSLYYLFLPYLLLIVNLLFFT) threads the bilayer. Over 117 to 196 (LSCVTNPGTI…GAWNTRYFLS (80 aa)) the chain is Cytoplasmic. The 51-residue stretch at 149-199 (VRCPTCDLRKPARSKHCSVCNRCVHRFDHHCVWVNNCIGAWNTRYFLSYLF) folds into the DHHC domain. Catalysis depends on cysteine 179, which acts as the S-palmitoyl cysteine intermediate. A helical membrane pass occupies residues 197–217 (YLFTLTASAATMAVVSTVFLV). Residues 218–255 (RLVVMSDVYLQTYVDDLGHLQVVDTVFLVQYLFLTFPR) lie on the Lumenal side of the membrane. A helical transmembrane segment spans residues 256-276 (IVFLVGFVVVLSFLLGGYLCF). The Cytoplasmic segment spans residues 277-343 (CLYLAATNQT…ATACYERKEK (67 aa)). Positions 340-343 (RKEK) match the Di-lysine motif motif.

The protein belongs to the DHHC palmitoyltransferase family. As to quaternary structure, interacts with CPT1A.

The protein resides in the endoplasmic reticulum membrane. The protein localises to the golgi apparatus membrane. Its subcellular location is the cell membrane. The enzyme catalyses L-cysteinyl-[protein] + hexadecanoyl-CoA = S-hexadecanoyl-L-cysteinyl-[protein] + CoA. In terms of biological role, palmitoyltransferase that could catalyze the addition of palmitate onto protein substrates including the D(2) dopamine receptor DRD2, GSK3B or MAVS. Mediates GSK3B palmitoylation to prevent its AKT1-mediated phosphorylation leading to activation of the STAT3 signaling pathway. Also catalyzes MAVS palmitoylation which promotes its stabilization and activation by inhibiting 'Lys-48'- but facilitating 'Lys-63'-linked ubiquitination. This chain is Palmitoyltransferase ZDHHC4, found in Bos taurus (Bovine).